The sequence spans 460 residues: Elongation factor 1-alpha (460 aa).

A N,N,N-trimethylglycine modification is found at glycine 2. Lysine 3 carries the post-translational modification N6,N6-dimethyllysine; alternate. Lysine 3 carries the post-translational modification N6-methyllysine; alternate. The region spanning 5–240 (KLHVNVVVIG…DAIEPPVRPS (236 aa)) is the tr-type G domain. Residues 14-21 (GHVDSGKS) are G1. 14-21 (GHVDSGKS) is a GTP binding site. Lysine 30 carries the post-translational modification N6-methyllysine. Residues 70-74 (GITID) form a G2 region. The residue at position 79 (lysine 79) is an N6,N6,N6-trimethyllysine. The tract at residues 91–94 (DAPG) is G3. Residues 91–95 (DAPGH) and 153–156 (NKMD) each bind GTP. Residues 153–156 (NKMD) are G4. The segment at 192 to 194 (SGW) is G5. At lysine 316 the chain carries N6,N6-dimethyllysine; alternate. Lysine 316 bears the N6-methyllysine; alternate mark. Lysine 390 is modified (N6-methyllysine).

This sequence belongs to the TRAFAC class translation factor GTPase superfamily. Classic translation factor GTPase family. EF-Tu/EF-1A subfamily.

The protein resides in the cytoplasm. Its function is as follows. This protein promotes the GTP-dependent binding of aminoacyl-tRNA to the A-site of ribosomes during protein biosynthesis. This is Elongation factor 1-alpha (TEF1) from Schizophyllum commune (Split gill fungus).